A 398-amino-acid chain; its full sequence is MLNNKRLFTSESVTEGHPDKIADQVSDAILDAILKDDPNARVACETTVTTGMALIAGEISTTTYVDIPKVVRETIKEIGYTRAKYGYDYETMAILTAIDEQSPDIAQGVDKALEYRDKDSEEEIEATGAGDQGLMFGYATNETETYMPLAIYLSHQLAKRLSDVRKDGTLNYLRPDGKVQVTVEYDENDNPVRIDTIVVSTQHADDVTLEQIQEDIKAHVIYPTVPENLINEQTKFYINPTGRFVIGGPQGDAGLTGRKIIVDTYGGYARHGGGCFSGKDPTKVDRSAAYAARYVAKNIVAAGLADQCEVQLAYAIGVAEPVSIAIDTFGTGKVSEGQLVEAVRKHFDLRPAGIIKMLDLKQPIYKQTAAYGHFGRTDVLFPWEKLDKVEELKDAVKY.

Position 17 (histidine 17) interacts with ATP. Aspartate 19 lines the Mg(2+) pocket. Residue glutamate 45 coordinates K(+). Glutamate 58 and glutamine 101 together coordinate L-methionine. The segment at glutamine 101–lysine 111 is flexible loop. ATP contacts are provided by residues aspartate 176–lysine 178, arginine 243–phenylalanine 244, aspartate 252, arginine 258–lysine 259, and lysine 279. Aspartate 252 provides a ligand contact to L-methionine. Residue lysine 283 coordinates L-methionine.

This sequence belongs to the AdoMet synthase family. Homotetramer; dimer of dimers. Mg(2+) serves as cofactor. K(+) is required as a cofactor.

It is found in the cytoplasm. It carries out the reaction L-methionine + ATP + H2O = S-adenosyl-L-methionine + phosphate + diphosphate. It participates in amino-acid biosynthesis; S-adenosyl-L-methionine biosynthesis; S-adenosyl-L-methionine from L-methionine: step 1/1. Functionally, catalyzes the formation of S-adenosylmethionine (AdoMet) from methionine and ATP. The overall synthetic reaction is composed of two sequential steps, AdoMet formation and the subsequent tripolyphosphate hydrolysis which occurs prior to release of AdoMet from the enzyme. The polypeptide is S-adenosylmethionine synthase (Staphylococcus aureus (strain Mu3 / ATCC 700698)).